An 833-amino-acid polypeptide reads, in one-letter code: Homeobox-leucine zipper protein ATHB-8 (833 aa).

Residues 12 to 75 (DNGKYVRYTP…NRRCREKQRK (64 aa)) constitute a DNA-binding region (homeobox). The stretch at 70-108 (REKQRKEASRLQAVNRKLTAMNKLLMEENDRLQKQVSHL) forms a coiled coil. The 229-residue stretch at 150–378 (RDASPAGLLS…ISQEISQPNV (229 aa)) folds into the START domain.

This sequence belongs to the HD-ZIP homeobox family. Class III subfamily. As to quaternary structure, interacts with ESR1 and ESR2. Interacts with ZPR3.

It is found in the nucleus. Probable transcription factor involved in the regulation of vascular development. May promote differentiation of precambial and cambial cells. The polypeptide is Homeobox-leucine zipper protein ATHB-8 (ATHB-8) (Arabidopsis thaliana (Mouse-ear cress)).